The chain runs to 182 residues: MLQALLIFVLQIIYVPILTIRTILLVKNQTRSAAGVGLLEGAIYIVSLGIVFQDLSNWMNIVAYVIGFSAGLLLGGYIENKLAIGYITYQVSLLDRCNELVDELRHSGFGVTVFEGEGINSIRYRLDIVAKRSREKELLEIINEIAPKAFMSSYEIRSFKGGYLTKAMKKRALMKKKDEHAS.

Helical transmembrane passes span 6-26, 32-52, and 58-78; these read LIFV…ILLV, SAAG…GIVF, and WMNI…GGYI.

Belongs to the UPF0316 family.

It is found in the cell membrane. The chain is UPF0316 protein BCB4264_A3368 from Bacillus cereus (strain B4264).